The following is a 171-amino-acid chain: MQEKYNFGKVSSQHKNYSKIETMLRPKGFDKLDHYFRTELDIDLTDETIELLLNSVKAAFGKLFYGAEQRARWNGRDFIALADLNITKALEEHIKNFQKIEQDMGVDELLEYIAFIPPVEMNVGEDLKSEYRNIMGGLLLMHADVIKKATGERKPSREAMEFVAQIVDKVF.

This sequence to A.aeolicus aq_616.

This is an uncharacterized protein from Aquifex aeolicus (strain VF5).